A 105-amino-acid polypeptide reads, in one-letter code: uncharacterized protein (105 aa).

The first 19 residues, 1–19 (MKLVFIFATAAIMGVVVYG), serve as a signal peptide directing secretion.

This is an uncharacterized protein from Magallana gigas (Pacific oyster).